A 953-amino-acid polypeptide reads, in one-letter code: Nonsense-mediated mRNA decay factor SMG8 (953 aa).

Disordered stretches follow at residues 571–604 and 629–653; these read AQDAELDPDEEDEELPTGEREEQHITQSNGCSQP and PCFDQSSSSEAESTCSGTSSEESNN. A compositionally biased stretch (acidic residues) spans 574–586; the sequence is AELDPDEEDEELP. Residues 595-604 show a composition bias toward polar residues; the sequence is ITQSNGCSQP. A compositionally biased stretch (low complexity) spans 634-653; it reads SSSSEAESTCSGTSSEESNN.

Belongs to the SMG8 family.

Its function is as follows. Involved in nonsense-mediated decay (NMD) of mRNAs containing premature stop codons. Probable component of kinase complex containing nonC and recruited to stalled ribosomes. The sequence is that of Nonsense-mediated mRNA decay factor SMG8 from Drosophila persimilis (Fruit fly).